We begin with the raw amino-acid sequence, 480 residues long: MGKGEIVQVIGPVVDVEFPLDKDLPDINNALRVTNNNGDTLVLEVTLELGDGVLRTISMESTDGLRRGMEVEDTGAPISVPVGKDTLGRVFNVLGDPIDGGPALGKDVKREGIHKEAPKYDELSTSEEILETGIKVIDLLEPYVRGGKVGLFGGAGVGKTTIIQELIHNIAQEHGGISVFTGVGERTREGNDLYFEMKASGVLSKTAMVFGQMNEPPGARMRVALTGLTIAEYFRDVEGLDVLLFIDNIFRFTQAGSEVSALLGRMPSAVGYQPTLATEMGQLQERITSTKKGSITSIQAVYVPADDYTDPAPATTFAHLDATTNLERRLVEQGIYPAVDPLESTSSALDPEVVGEEHYQVAVQVQHILQRYQELQDIISVLGMDELSDDEKLIVERARKIQFFLSQNFFVAEQFTGLPGSYVPIKETIKGFKMIIDGKLDDLPEDAFRNVGPIEDVVKKAEKMGVTPKNPEAKAMLEAK.

153-160 contributes to the ATP binding site; that stretch reads GGAGVGKT.

It belongs to the ATPase alpha/beta chains family. As to quaternary structure, F-type ATPases have 2 components, CF(1) - the catalytic core - and CF(0) - the membrane proton channel. CF(1) has five subunits: alpha(3), beta(3), gamma(1), delta(1), epsilon(1). CF(0) has three main subunits: a(1), b(2) and c(9-12). The alpha and beta chains form an alternating ring which encloses part of the gamma chain. CF(1) is attached to CF(0) by a central stalk formed by the gamma and epsilon chains, while a peripheral stalk is formed by the delta and b chains.

Its subcellular location is the cell membrane. It carries out the reaction ATP + H2O + 4 H(+)(in) = ADP + phosphate + 5 H(+)(out). In terms of biological role, produces ATP from ADP in the presence of a proton gradient across the membrane. The catalytic sites are hosted primarily by the beta subunits. In Lactobacillus gasseri (strain ATCC 33323 / DSM 20243 / BCRC 14619 / CIP 102991 / JCM 1131 / KCTC 3163 / NCIMB 11718 / NCTC 13722 / AM63), this protein is ATP synthase subunit beta.